Here is a 171-residue protein sequence, read N- to C-terminus: UPF0316 protein EAT1b_0871 (171 aa).

The next 3 helical transmembrane spans lie at 4–24 (ILLILLLQLIYVPVLTLRTIM), 32–52 (IAGLFGTLETLIYIFALGIVF), and 57–77 (TVGMIVYAVGFGLGILLGGFV).

The protein belongs to the UPF0316 family.

The protein resides in the cell membrane. This Exiguobacterium sp. (strain ATCC BAA-1283 / AT1b) protein is UPF0316 protein EAT1b_0871.